The chain runs to 181 residues: Probable pyruvoyl-dependent arginine decarboxylase (181 aa).

A Pyruvic acid (Ser) modification is found at Ser-43.

Belongs to the PdaD family. Pyruvate is required as a cofactor.

The catalysed reaction is L-arginine + H(+) = agmatine + CO2. In Chlorobium limicola (strain DSM 245 / NBRC 103803 / 6330), this protein is Probable pyruvoyl-dependent arginine decarboxylase.